The primary structure comprises 334 residues: G-protein coupled receptor 12 (334 aa).

At 1 to 48 the chain is on the extracellular side; the sequence is MNEDPKVNLSGLPRDCIEAGTPENISAAVPSQGSVVESEPELVVNPWD. N-linked (GlcNAc...) asparagine glycans are attached at residues N8 and N24. Residues 49 to 69 form a helical membrane-spanning segment; sequence IVLCSSGTLICCENAVVVLII. Residues 70-78 lie on the Cytoplasmic side of the membrane; that stretch reads FHSPSLRAP. Residues 79 to 99 traverse the membrane as a helical segment; that stretch reads MFLLIGSLALADLLAGLGLII. Topologically, residues 100 to 113 are extracellular; it reads NFVFAYLLQSEATK. A helical transmembrane segment spans residues 114–134; that stretch reads LVTIGLIVASFSASVCSLLAI. At 135-158 the chain is on the cytoplasmic side; sequence TVDRYLSLYYALTYHSERTVTFTY. The helical transmembrane segment at 159–179 threads the bilayer; that stretch reads VMLVMLWGTSTCLGLLPVMGW. At 180 to 199 the chain is on the extracellular side; sequence NCLRDESTCSVVRPLTKNNA. The helical transmembrane segment at 200-220 threads the bilayer; that stretch reads AILSISFLFMFALMLQLYIQI. The Cytoplasmic segment spans residues 221–252; that stretch reads CKIVMRHAHQIALQHHFLATSHYVTTRKGIST. The chain crosses the membrane as a helical span at residues 253–273; that stretch reads LALILGTFAACWMPFTLYSLI. At 274 to 282 the chain is on the extracellular side; sequence ADYTYPSIY. Residues 283-303 traverse the membrane as a helical segment; the sequence is TYATLLPATYNSIINPVIYAF. Residues 304–334 are Cytoplasmic-facing; the sequence is RNQEIQKALCLICCGCIPNTLSQRARSPSDV. C317 carries the S-palmitoyl cysteine lipid modification. S330 and S332 each carry phosphoserine.

The protein belongs to the G-protein coupled receptor 1 family. As to expression, expressed in the brain, pituitary gland and testis.

It is found in the cell membrane. Receptor with constitutive G(s) signaling activity that activates cyclic AMP. Promotes neurite outgrowth and blocks myelin inhibition in neurons. The sequence is that of G-protein coupled receptor 12 (Gpr12) from Rattus norvegicus (Rat).